Reading from the N-terminus, the 207-residue chain is Guanylate kinase (207 aa).

The Guanylate kinase-like domain occupies 4 to 184 (GTLYIVSAPS…ALTDLKTIIR (181 aa)). 11–18 (APSGAGKS) is a binding site for ATP.

This sequence belongs to the guanylate kinase family.

The protein resides in the cytoplasm. The catalysed reaction is GMP + ATP = GDP + ADP. In terms of biological role, essential for recycling GMP and indirectly, cGMP. This chain is Guanylate kinase, found in Escherichia coli O157:H7.